The following is a 251-amino-acid chain: Small ribosomal subunit protein uS3 (251 aa).

The KH type-2 domain maps to Ile39–Arg112. Residues Glu222–Lys251 form a disordered region. Over residues Ala240–Lys251 the composition is skewed to basic and acidic residues.

This sequence belongs to the universal ribosomal protein uS3 family. Part of the 30S ribosomal subunit. Forms a tight complex with proteins S10 and S14.

Its function is as follows. Binds the lower part of the 30S subunit head. Binds mRNA in the 70S ribosome, positioning it for translation. The polypeptide is Small ribosomal subunit protein uS3 (Anaeroplasma abactoclasticum).